The following is an 89-amino-acid chain: Small ribosomal subunit protein uS14 (89 aa).

The protein belongs to the universal ribosomal protein uS14 family. As to quaternary structure, part of the 30S ribosomal subunit. Contacts proteins S3 and S10.

Binds 16S rRNA, required for the assembly of 30S particles and may also be responsible for determining the conformation of the 16S rRNA at the A site. This chain is Small ribosomal subunit protein uS14, found in Shouchella clausii (strain KSM-K16) (Alkalihalobacillus clausii).